We begin with the raw amino-acid sequence, 119 residues long: MIPGRMNSREMRRLMAQMGIKSTEMDDVTKVIFKGKTKDYVIDNAQVTMIEAQGVKTFQVVGTMREVPKEPEEKKEESFPEDDIKLVMEQASVSREKAIEALKASGGEPAQAIMNLMQK.

Residues 5-73 enclose the NAC-A/B domain; it reads RMNSREMRRL…MREVPKEPEE (69 aa).

This sequence belongs to the NAC-alpha family. Homodimer. Interacts with the ribosome. Binds ribosomal RNA.

Contacts the emerging nascent chain on the ribosome. The sequence is that of Nascent polypeptide-associated complex protein from Thermoplasma acidophilum (strain ATCC 25905 / DSM 1728 / JCM 9062 / NBRC 15155 / AMRC-C165).